The chain runs to 463 residues: Quinolone resistance protein NorB (463 aa).

The next 14 membrane-spanning stretches (helical) occupy residues Ile17 to Val37, Ile53 to Ala73, Ile86 to Ile106, Ile107 to Ile127, Tyr142 to Ala162, Leu165 to Ile185, Phe201 to Thr221, Ser230 to Leu250, Thr273 to Val293, Tyr299 to Ile319, Pro334 to Leu354, Ile357 to Tyr377, Met403 to Val423, and Ile435 to Val455.

Belongs to the major facilitator superfamily. TCR/Tet family.

The protein resides in the cell membrane. Its function is as follows. Multidrug efflux pump that acts independently of NorA and is one of the factors that confers resistance against diverse quinolones and chemical compounds. This chain is Quinolone resistance protein NorB (norB), found in Staphylococcus aureus (strain Mu3 / ATCC 700698).